We begin with the raw amino-acid sequence, 324 residues long: Granaticin polyketide synthase bifunctional cyclase/dehydratase (324 aa).

Residues 1–21 (MVQPAATPVSLPSPTVHRSEH) are disordered.

Its pathway is antibiotic biosynthesis; granaticin biosynthesis. Functionally, is needed for correct cyclization of the oligoketide leading to isochromanequinone formation. The sequence is that of Granaticin polyketide synthase bifunctional cyclase/dehydratase (gra-orf4) from Streptomyces violaceoruber.